The chain runs to 375 residues: Alcohol dehydrogenase 1 (375 aa).

Ser-2 bears the N-acetylserine mark. 7 residues coordinate Zn(2+): Cys-47, His-68, Cys-98, Cys-101, Cys-104, Cys-112, and Cys-175. NAD(+) is bound by residues 200-205 (GLGGVG), Asp-224, Lys-229, 293-295 (LGV), and Arg-370.

This sequence belongs to the zinc-containing alcohol dehydrogenase family. Class-I subfamily. Homodimer. It depends on Zn(2+) as a cofactor.

It is found in the cytoplasm. The catalysed reaction is a primary alcohol + NAD(+) = an aldehyde + NADH + H(+). It catalyses the reaction a secondary alcohol + NAD(+) = a ketone + NADH + H(+). In Apteryx australis (Southern brown kiwi), this protein is Alcohol dehydrogenase 1 (ADH1).